A 275-amino-acid polypeptide reads, in one-letter code: DNA repair protein RecO (275 aa).

The disordered stretch occupies residues methionine 1–serine 38. Over residues aspartate 8 to aspartate 24 the composition is skewed to low complexity.

It belongs to the RecO family.

Its function is as follows. Involved in DNA repair and RecF pathway recombination. The polypeptide is DNA repair protein RecO (Burkholderia pseudomallei (strain 1710b)).